A 1373-amino-acid polypeptide reads, in one-letter code: DNA-directed RNA polymerase subunit beta (1373 aa).

This sequence belongs to the RNA polymerase beta chain family. In terms of assembly, the RNAP catalytic core consists of 2 alpha, 1 beta, 1 beta' and 1 omega subunit. When a sigma factor is associated with the core the holoenzyme is formed, which can initiate transcription.

It catalyses the reaction RNA(n) + a ribonucleoside 5'-triphosphate = RNA(n+1) + diphosphate. DNA-dependent RNA polymerase catalyzes the transcription of DNA into RNA using the four ribonucleoside triphosphates as substrates. The chain is DNA-directed RNA polymerase subunit beta from Rickettsia peacockii (strain Rustic).